We begin with the raw amino-acid sequence, 1161 residues long: DNA-directed RNA polymerase subunit beta' (1161 aa).

Zn(2+)-binding residues include cysteine 60, cysteine 62, cysteine 75, and cysteine 78. Mg(2+) contacts are provided by aspartate 449, aspartate 451, and aspartate 453. Residues cysteine 790, cysteine 864, cysteine 871, and cysteine 874 each coordinate Zn(2+).

This sequence belongs to the RNA polymerase beta' chain family. As to quaternary structure, the RNAP catalytic core consists of 2 alpha, 1 beta, 1 beta' and 1 omega subunit. When a sigma factor is associated with the core the holoenzyme is formed, which can initiate transcription. Requires Mg(2+) as cofactor. It depends on Zn(2+) as a cofactor.

It carries out the reaction RNA(n) + a ribonucleoside 5'-triphosphate = RNA(n+1) + diphosphate. Its function is as follows. DNA-dependent RNA polymerase catalyzes the transcription of DNA into RNA using the four ribonucleoside triphosphates as substrates. This Clostridioides difficile (strain 630) (Peptoclostridium difficile) protein is DNA-directed RNA polymerase subunit beta'.